The following is a 289-amino-acid chain: ATP synthase gamma chain (289 aa).

It belongs to the ATPase gamma chain family. In terms of assembly, F-type ATPases have 2 components, CF(1) - the catalytic core - and CF(0) - the membrane proton channel. CF(1) has five subunits: alpha(3), beta(3), gamma(1), delta(1), epsilon(1). CF(0) has three main subunits: a, b and c.

It is found in the cell inner membrane. Produces ATP from ADP in the presence of a proton gradient across the membrane. The gamma chain is believed to be important in regulating ATPase activity and the flow of protons through the CF(0) complex. The polypeptide is ATP synthase gamma chain (Anaeromyxobacter dehalogenans (strain 2CP-C)).